Reading from the N-terminus, the 165-residue chain is uncharacterized protein (165 aa).

A helical transmembrane segment spans residues A16 to V36.

It belongs to the asfivirus F165R family.

It localises to the host membrane. This is an uncharacterized protein from Ornithodoros (relapsing fever ticks).